Here is a 247-residue protein sequence, read N- to C-terminus: Protein ATC1/LIC4 (247 aa).

Disordered stretches follow at residues 95 to 146 (NSSA…DDQA) and 226 to 247 (EKST…CPSS). Polar residues predominate over residues 129–146 (QNPSHRISNVQSNSDDQA).

Its subcellular location is the cytoplasm. The protein localises to the nucleus. Functionally, involved in cation homeostasis and in the regulation of the cation stress signaling cascades. The chain is Protein ATC1/LIC4 (ATC1) from Debaryomyces hansenii (strain ATCC 36239 / CBS 767 / BCRC 21394 / JCM 1990 / NBRC 0083 / IGC 2968) (Yeast).